The chain runs to 1155 residues: ATP-dependent helicase/deoxyribonuclease subunit B (1155 aa).

A UvrD-like helicase ATP-binding domain is found at 1–300; that stretch reads MSLRFIVGRA…AHLEKYYFRH (300 aa). Position 8–15 (8–15) interacts with ATP; it reads GRAGSGKS. The UvrD-like helicase C-terminal domain occupies 280-590; that stretch reads TPVRFQKDSA…VVGTLERSRN (311 aa). The [4Fe-4S] cluster site is built by cysteine 792, cysteine 1111, cysteine 1114, and cysteine 1120.

This sequence belongs to the helicase family. AddB/RexB type 1 subfamily. Heterodimer of AddA and AddB. Requires Mg(2+) as cofactor. [4Fe-4S] cluster is required as a cofactor.

Its function is as follows. The heterodimer acts as both an ATP-dependent DNA helicase and an ATP-dependent, dual-direction single-stranded exonuclease. Recognizes the chi site generating a DNA molecule suitable for the initiation of homologous recombination. The AddB subunit has 5' -&gt; 3' nuclease activity but not helicase activity. The protein is ATP-dependent helicase/deoxyribonuclease subunit B of Desulforamulus reducens (strain ATCC BAA-1160 / DSM 100696 / MI-1) (Desulfotomaculum reducens).